The chain runs to 156 residues: MPRRREVPKREVLPDPKFGNVDVAKFMNVLMLSGKKSVAERIVYGAFEQIQTKGGKDPLEVFTVALNNVKPVVEVKSRRVGGANYQVPVEVRPSRRMALAMRWLREAAKKRSEKSMALRLAGELSEAAEGRGGAMKKRDEVHRMAEANKAFSHFRF.

It belongs to the universal ribosomal protein uS7 family. Part of the 30S ribosomal subunit. Contacts proteins S9 and S11.

In terms of biological role, one of the primary rRNA binding proteins, it binds directly to 16S rRNA where it nucleates assembly of the head domain of the 30S subunit. Is located at the subunit interface close to the decoding center, probably blocks exit of the E-site tRNA. The protein is Small ribosomal subunit protein uS7 of Paraburkholderia phymatum (strain DSM 17167 / CIP 108236 / LMG 21445 / STM815) (Burkholderia phymatum).